Reading from the N-terminus, the 772-residue chain is Bromo adjacent homology domain-containing 1 protein (772 aa).

Disordered regions lie at residues 1-63 (MTHT…RSLV) and 77-117 (LENV…PRKR). Ser8 bears the Phosphoserine mark. The segment covering 49–61 (TGRRKNYPLRKRS) has biased composition (basic residues). Ser101 and Ser121 each carry phosphoserine. 3 disordered regions span residues 131 to 357 (LLER…PADY), 521 to 582 (QTVA…RTNG), and 723 to 743 (PSRK…PHRT). 3 stretches are compositionally biased toward basic and acidic residues: residues 147-158 (RGGDPHRSRDRA), 170-182 (RLGD…RDLS), and 189-199 (EGARRDGDPAP). A Phosphoserine modification is found at Ser182. The residue at position 204 (Ser204) is a Phosphoserine. Pro residues predominate over residues 280-289 (SAPPHGPPTQ). The segment covering 299 to 310 (LENPLRPNLPLL) has biased composition (low complexity). The segment covering 340–352 (FPAPQLSPLPMPG) has biased composition (pro residues). The segment covering 536–548 (GSKSGLRTGSSCR) has biased composition (polar residues). Over residues 549-580 (HTVRSKAARRPSHPKQPRAQRPRPRRRRRRRT) the composition is skewed to basic residues. Thr580 bears the Phosphothreonine mark. Positions 616-771 (ETIRVRDTVL…FRHGRILKNP (156 aa)) constitute a BAH domain.

As to quaternary structure, interacts with CBX5 (HP1 alpha), HDAC5, MBD1 and SP1. Post-translationally, ubiquitinated in a FBXO11-dependent manner; leading to degradation.

The protein resides in the nucleus. Its subcellular location is the chromosome. Heterochromatin protein that acts as a transcription repressor and has the ability to promote the formation of large heterochromatic domains. May act by recruiting heterochromatin proteins such as CBX5 (HP1 alpha), HDAC5 and MBD1. Represses IGF2 expression by binding to its CpG-rich P3 promoter and recruiting heterochromatin proteins. The sequence is that of Bromo adjacent homology domain-containing 1 protein (Bahd1) from Mus musculus (Mouse).